Here is a 450-residue protein sequence, read N- to C-terminus: UDP-N-acetylmuramoylalanine--D-glutamate ligase (450 aa).

ATP is bound at residue 115–121 (GTNGKTT).

It belongs to the MurCDEF family.

It is found in the cytoplasm. It carries out the reaction UDP-N-acetyl-alpha-D-muramoyl-L-alanine + D-glutamate + ATP = UDP-N-acetyl-alpha-D-muramoyl-L-alanyl-D-glutamate + ADP + phosphate + H(+). It participates in cell wall biogenesis; peptidoglycan biosynthesis. Functionally, cell wall formation. Catalyzes the addition of glutamate to the nucleotide precursor UDP-N-acetylmuramoyl-L-alanine (UMA). This is UDP-N-acetylmuramoylalanine--D-glutamate ligase from Desulfatibacillum aliphaticivorans.